Consider the following 667-residue polypeptide: MRLTSLQRVGHTAVENNLSNASQRTILLKDENRLEQRLKEIPAEPGCYLMRDVEDRLLYVGKSKCLRNRVRSYFRSSSDHGPRIRLMVRQIAEIEFIVTDSEAESLVLESNLIKNQQPHFNVLLKDDKKYPYLCITWSEEYPRIFITRRRRFRNKNDRFYGPYVDVGLLRRTLLLVKRSFPLRQRPRPLHQDRTCLNYSIGRCPGVCQQKITPQDYHQVLRKVAMVFQGRNQELKVLLEKQMERYSDRMDYESAANIRDQIKGLEQLTEGQKMSLPDSSVSRDVLAIASDHRVAAVQLFQMRAGKLVNRLGFTADAVDQTLGSVLQRVIEEHYSQVDAVEVPPEVLVQYSLPQQELLVDWLSEHRGRRVQISCPQRQAKAELIELVERNAVFELSRAKSGQQQQELATEDLAQLLELTTQPRRIEGYDISHIQGSDAVASQVVFIDGLPAKQHYRKYKIKSSSIKSGHSDDFMAMAEIMRRRFRRWARVKQEGSNFENLQRCSGSALQTDGLNDWPDVVMIDGGKGQLSSAMEALRELDLHEDLVVCSLAKKHEQIFVPGQSKPLDSDPDQLGVVLLRRLRDEAHRFAVSYHRQQRGVRMNRSRLTDIPGLGPRRVRDLLAHFQSIDAIQLASVQQISQAPGLGPALALQVWTYFHPEADIALEEVA.

The 80-residue stretch at 43-122 (AEPGCYLMRD…IKNQQPHFNV (80 aa)) folds into the GIY-YIG domain. One can recognise a UVR domain in the interval 232–267 (QELKVLLEKQMERYSDRMDYESAANIRDQIKGLEQL).

This sequence belongs to the UvrC family. As to quaternary structure, interacts with UvrB in an incision complex.

The protein localises to the cytoplasm. Its function is as follows. The UvrABC repair system catalyzes the recognition and processing of DNA lesions. UvrC both incises the 5' and 3' sides of the lesion. The N-terminal half is responsible for the 3' incision and the C-terminal half is responsible for the 5' incision. This chain is UvrABC system protein C, found in Prochlorococcus marinus (strain MIT 9313).